Here is a 66-residue protein sequence, read N- to C-terminus: Phylloseptin-B1 (66 aa).

Residues methionine 1–cysteine 22 form the signal peptide. Positions glutamate 23–arginine 46 are excised as a propeptide. Leucine 65 is modified (leucine amide).

It belongs to the frog skin active peptide (FSAP) family. Phylloseptin subfamily. In terms of tissue distribution, expressed by the skin glands.

It is found in the secreted. The protein localises to the target cell membrane. Functionally, antimicrobial peptide with activity against only a few strains of Gram-positive bacteria (S.aureus and B.megaterium). Acts in a synergistic effect in combination with Plasticin-B1 at doses that are not active alone. The sequence is that of Phylloseptin-B1 from Phyllomedusa bicolor (Two-colored leaf frog).